The primary structure comprises 211 residues: Small ribosomal subunit protein uS3 (211 aa).

The 69-residue stretch at 38 to 106 folds into the KH type-2 domain; the sequence is LRSFVKKTFH…DVELHIVEVK (69 aa).

It belongs to the universal ribosomal protein uS3 family. In terms of assembly, part of the 30S ribosomal subunit. Forms a tight complex with proteins S10 and S14.

Its function is as follows. Binds the lower part of the 30S subunit head. Binds mRNA in the 70S ribosome, positioning it for translation. This is Small ribosomal subunit protein uS3 from Anaplasma marginale (strain Florida).